The chain runs to 84 residues: Large ribosomal subunit protein bL27 (84 aa).

A disordered region spans residues 1–27 (MAHKKGQGASRNGRDSKSKRLGVKVGA).

The protein belongs to the bacterial ribosomal protein bL27 family.

This Chlamydia pneumoniae (Chlamydophila pneumoniae) protein is Large ribosomal subunit protein bL27.